Reading from the N-terminus, the 379-residue chain is Homoserine O-succinyltransferase (379 aa).

The AB hydrolase-1 domain maps to 51 to 360 (NAVLICHALS…DAPQGHDAFL (310 aa)). Ser157 functions as the Nucleophile in the catalytic mechanism. Residue Arg227 coordinates substrate. Active-site residues include Asp323 and His356. Asp357 contacts substrate.

The protein belongs to the AB hydrolase superfamily. MetX family. Homodimer.

It is found in the cytoplasm. The enzyme catalyses L-homoserine + succinyl-CoA = O-succinyl-L-homoserine + CoA. It functions in the pathway amino-acid biosynthesis; L-methionine biosynthesis via de novo pathway; O-succinyl-L-homoserine from L-homoserine: step 1/1. Functionally, transfers a succinyl group from succinyl-CoA to L-homoserine, forming succinyl-L-homoserine. This chain is Homoserine O-succinyltransferase, found in Pseudomonas fluorescens (strain ATCC BAA-477 / NRRL B-23932 / Pf-5).